A 464-amino-acid chain; its full sequence is Asparagine--tRNA ligase (464 aa).

This sequence belongs to the class-II aminoacyl-tRNA synthetase family. In terms of assembly, homodimer.

It is found in the cytoplasm. It catalyses the reaction tRNA(Asn) + L-asparagine + ATP = L-asparaginyl-tRNA(Asn) + AMP + diphosphate + H(+). This chain is Asparagine--tRNA ligase, found in Clostridium botulinum (strain Alaska E43 / Type E3).